The primary structure comprises 213 residues: Ribonuclease HII (213 aa).

Residues 27–213 (HAVAGVDEAG…FRGVKEHVAP (187 aa)) form the RNase H type-2 domain. Residues Asp33, Glu34, and Asp125 each coordinate a divalent metal cation.

This sequence belongs to the RNase HII family. Requires Mn(2+) as cofactor. The cofactor is Mg(2+).

The protein resides in the cytoplasm. The catalysed reaction is Endonucleolytic cleavage to 5'-phosphomonoester.. Its function is as follows. Endonuclease that specifically degrades the RNA of RNA-DNA hybrids. This Geobacter metallireducens (strain ATCC 53774 / DSM 7210 / GS-15) protein is Ribonuclease HII.